We begin with the raw amino-acid sequence, 66 residues long: Toxin Tppa2 (66 aa).

Positions 1–63 (KDGYLVGNDG…TWSRATNKCG (63 aa)) constitute an LCN-type CS-alpha/beta domain. 4 disulfides stabilise this stretch: C11–C62, C15–C37, C23–C43, and C27–C45. C62 carries the cysteine amide modification.

It belongs to the long (4 C-C) scorpion toxin superfamily. Sodium channel inhibitor family. Beta subfamily. In terms of tissue distribution, expressed by the venom gland.

The protein resides in the secreted. Its function is as follows. Beta toxins bind voltage-independently at site-4 of sodium channels (Nav) and shift the voltage of activation toward more negative potentials thereby affecting sodium channel activation and promoting spontaneous and repetitive firing. The sequence is that of Toxin Tppa2 from Tityus pachyurus (Colombian scorpion).